Reading from the N-terminus, the 196-residue chain is Anthranilate synthase component 2 (196 aa).

The Glutamine amidotransferase type-1 domain maps to 3–196 (VILIIDNYDS…RTVIRNFLRM (194 aa)). L-glutamine is bound at residue 60–62 (GPG). Cys-89 acts as the Nucleophile; for GATase activity in catalysis. L-glutamine is bound by residues Gln-93 and 138 to 139 (SL). Residues His-177 and Glu-179 each act as for GATase activity in the active site.

As to quaternary structure, heterotetramer consisting of two non-identical subunits: a beta subunit (TrpG) and a large alpha subunit (TrpE).

It catalyses the reaction chorismate + L-glutamine = anthranilate + pyruvate + L-glutamate + H(+). It functions in the pathway amino-acid biosynthesis; L-tryptophan biosynthesis; L-tryptophan from chorismate: step 1/5. Part of a heterotetrameric complex that catalyzes the two-step biosynthesis of anthranilate, an intermediate in the biosynthesis of L-tryptophan. In the first step, the glutamine-binding beta subunit (TrpG) of anthranilate synthase (AS) provides the glutamine amidotransferase activity which generates ammonia as a substrate that, along with chorismate, is used in the second step, catalyzed by the large alpha subunit of AS (TrpE) to produce anthranilate. In the absence of TrpG, TrpE can synthesize anthranilate directly from chorismate and high concentrations of ammonia. The chain is Anthranilate synthase component 2 (trpG) from Methanothermobacter thermautotrophicus (strain ATCC 29096 / DSM 1053 / JCM 10044 / NBRC 100330 / Delta H) (Methanobacterium thermoautotrophicum).